The following is a 116-amino-acid chain: Putative BPES syndrome breakpoint region protein (116 aa).

In terms of tissue distribution, seems to be expressed only in testis.

The chain is Putative BPES syndrome breakpoint region protein (BPESC1) from Homo sapiens (Human).